We begin with the raw amino-acid sequence, 157 residues long: Transcriptional repressor NrdR (157 aa).

The segment at 3 to 34 (CPFCGFADTRVIDSRLGKEGNNIRRRRECSQC) is a zinc-finger region. The region spanning 49–139 (PLIIKKDARR…VYRQFKDINE (91 aa)) is the ATP-cone domain.

Belongs to the NrdR family. Zn(2+) is required as a cofactor.

Functionally, negatively regulates transcription of bacterial ribonucleotide reductase nrd genes and operons by binding to NrdR-boxes. The polypeptide is Transcriptional repressor NrdR (Syntrophotalea carbinolica (strain DSM 2380 / NBRC 103641 / GraBd1) (Pelobacter carbinolicus)).